A 1990-amino-acid polypeptide reads, in one-letter code: Protein TANC2 (1990 aa).

Disordered stretches follow at residues 1-85 (MFRN…SVDE) and 129-149 (SPCS…PCST). Residues S169, S238, S294, and S400 each carry the phosphoserine modification. The interval 396-442 (IASDSPHASPKHVDANRELPLTQPPSAHSSITSGSCPGTPEMRRRQE) is disordered. Residues 419 to 431 (PPSAHSSITSGSC) show a composition bias toward polar residues. ANK repeat units follow at residues 846 to 878 (EGLS…NINY), 884 to 913 (NNAP…NVDA), 917 to 946 (SGLT…KVDH), 950 to 979 (NGQC…TMAG), 990 to 1019 (AIQQ…KDEE), 1033 to 1062 (WGET…AVAQ), 1066 to 1095 (RGAV…DVNM), 1099 to 1128 (QGRT…SIAL), 1132 to 1161 (EGLT…ATDH), 1165 to 1194 (NGRT…MIEH), and 1198 to 1227 (SGMR…KIGP). TPR repeat units lie at residues 1244–1277 (LSKL…FPRE), 1291–1324 (VSLL…KPKS), and 1325–1358 (YEAY…CPNN). Disordered regions lie at residues 1372 to 1401 (CRQM…EPQH), 1430 to 1586 (EARP…KMAQ), and 1692 to 1718 (LTKE…PQIG). Phosphoserine occurs at positions 1442 and 1458. A compositionally biased stretch (polar residues) spans 1469–1498 (RSSSSVGSPTRQTYQSTSPALSPTHQNSHY). A phosphoserine mark is found at S1530 and S1545. Residues 1553–1572 (VYRSQSGSPVRYQQETSVSQ) show a composition bias toward polar residues. Asymmetric dimethylarginine occurs at positions 1563 and 1576. S1579 is subject to Phosphoserine. Position 1722 is a phosphoserine (S1722). Residues 1783-1798 (SPSSNSISSTSNLTPT) show a composition bias toward low complexity. 2 disordered regions span residues 1783–1803 (SPSS…RPSS) and 1821–1843 (DELS…SRTT). 2 positions are modified to phosphoserine: S1824 and S1827. A glycan (N-linked (GlcNAc...) asparagine) is linked at N1928. The interval 1968 to 1990 (SRDSRQGQTSPIKPKRPFVESNV) is disordered.

The protein belongs to the TANC family. As to quaternary structure, interacts with KIF1A; the interaction decreases in presence of calcium.

Its subcellular location is the cell projection. The protein resides in the dendritic spine. Functionally, scaffolding protein in the dendritic spines which acts as immobile postsynaptic posts able to recruit KIF1A-driven dense core vesicles to dendritic spines. The polypeptide is Protein TANC2 (TANC2) (Homo sapiens (Human)).